Here is a 135-residue protein sequence, read N- to C-terminus: Small ribosomal subunit protein uS12 (135 aa).

A disordered region spans residues 1 to 24 (MPTINQLVRKGRHSKTTKSKSPAL). A compositionally biased stretch (basic residues) spans 9-18 (RKGRHSKTTK). Residue aspartate 102 is modified to 3-methylthioaspartic acid.

It belongs to the universal ribosomal protein uS12 family. Part of the 30S ribosomal subunit. Contacts proteins S8 and S17. May interact with IF1 in the 30S initiation complex.

Functionally, with S4 and S5 plays an important role in translational accuracy. Interacts with and stabilizes bases of the 16S rRNA that are involved in tRNA selection in the A site and with the mRNA backbone. Located at the interface of the 30S and 50S subunits, it traverses the body of the 30S subunit contacting proteins on the other side and probably holding the rRNA structure together. The combined cluster of proteins S8, S12 and S17 appears to hold together the shoulder and platform of the 30S subunit. The polypeptide is Small ribosomal subunit protein uS12 (Lactobacillus delbrueckii subsp. bulgaricus (strain ATCC 11842 / DSM 20081 / BCRC 10696 / JCM 1002 / NBRC 13953 / NCIMB 11778 / NCTC 12712 / WDCM 00102 / Lb 14)).